Here is a 324-residue protein sequence, read N- to C-terminus: uncharacterized protein (324 aa).

This sequence to the C-terminal of para-aminobenzoate synthase component I.

This is an uncharacterized protein from Pasteurella multocida (strain Pm70).